Here is a 326-residue protein sequence, read N- to C-terminus: Iron-sulfur cluster assembly SufBD family protein PH0883 (326 aa).

This sequence belongs to the iron-sulfur cluster assembly SufBD family.

The polypeptide is Iron-sulfur cluster assembly SufBD family protein PH0883 (Pyrococcus horikoshii (strain ATCC 700860 / DSM 12428 / JCM 9974 / NBRC 100139 / OT-3)).